The sequence spans 518 residues: Gypsy retrotransposon integrase-like protein 1 (518 aa).

The Integrase catalytic domain maps to 135-293; sequence VVGNPWSVVT…PYFQMFNRNP (159 aa). A disordered region spans residues 326–348; the sequence is NQTPAAGQMESSTSEELSKSKVA. Position 498 is a phosphoserine (serine 498).

This chain is Gypsy retrotransposon integrase-like protein 1 (GIN1), found in Rattus norvegicus (Rat).